The sequence spans 487 residues: Argininosuccinate lyase (487 aa).

This sequence belongs to the lyase 1 family. Argininosuccinate lyase subfamily.

Its subcellular location is the cytoplasm. It catalyses the reaction 2-(N(omega)-L-arginino)succinate = fumarate + L-arginine. The protein operates within amino-acid biosynthesis; L-arginine biosynthesis; L-arginine from L-ornithine and carbamoyl phosphate: step 3/3. This is Argininosuccinate lyase from Methanococcus aeolicus (strain ATCC BAA-1280 / DSM 17508 / OCM 812 / Nankai-3).